We begin with the raw amino-acid sequence, 490 residues long: Betaine aldehyde dehydrogenase (490 aa).

Positions 26, 27, and 93 each coordinate K(+). 150-152 (GAW) is an NAD(+) binding site. The Charge relay system role is filled by lysine 162. 176 to 179 (KPSE) is a binding site for NAD(+). Valine 180 lines the K(+) pocket. Position 230–233 (230–233 (GTVT)) interacts with NAD(+). Leucine 246 contacts K(+). Glutamate 252 (proton acceptor) is an active-site residue. NAD(+) is bound by residues glycine 254, cysteine 286, and glutamate 387. Cysteine 286 serves as the catalytic Nucleophile. Position 286 is a cysteine sulfenic acid (-SOH) (cysteine 286). 2 residues coordinate K(+): lysine 457 and glycine 460. The Charge relay system role is filled by glutamate 464.

This sequence belongs to the aldehyde dehydrogenase family. Dimer of dimers. K(+) is required as a cofactor.

It carries out the reaction betaine aldehyde + NAD(+) + H2O = glycine betaine + NADH + 2 H(+). The protein operates within amine and polyamine biosynthesis; betaine biosynthesis via choline pathway; betaine from betaine aldehyde: step 1/1. Functionally, involved in the biosynthesis of the osmoprotectant glycine betaine. Catalyzes the irreversible oxidation of betaine aldehyde to the corresponding acid. The polypeptide is Betaine aldehyde dehydrogenase (Ectopseudomonas mendocina (strain ymp) (Pseudomonas mendocina)).